The primary structure comprises 192 residues: Ciliary microtubule-associated protein 3 (192 aa).

As to quaternary structure, interacts with proteins involved in ciliary transport, including ARL13B, CETN1, KIF3A, RAB6A, RAB8A, TUBB1 and TUBG1. Interacts with AURKA.

It is found in the cytoplasmic vesicle. Its subcellular location is the golgi apparatus. It localises to the trans-Golgi network. The protein localises to the cytoplasm. Functionally, during primary cilia disassembly, involved in cilia disassembly. Required specifically to control cilia retraction as well as the liberation and duplication of the basal body/centrosome. May act by stimulating AURKA activity at the basal body in a cell cycle-dependent manner. The chain is Ciliary microtubule-associated protein 3 (CIMAP3) from Bos taurus (Bovine).